Here is a 50-residue protein sequence, read N- to C-terminus: Sperm protamine P1 (50 aa).

Cystine bridges form between Cys7–Cys15 and Cys38–Cys46.

It belongs to the protamine P1 family. In terms of assembly, cross-linked by interchain disulfide bonds around the DNA-helix. As to expression, testis.

It localises to the nucleus. Its subcellular location is the chromosome. Its function is as follows. Protamines substitute for histones in the chromatin of sperm during the haploid phase of spermatogenesis. They compact sperm DNA into a highly condensed, stable and inactive complex. In Equus caballus (Horse), this protein is Sperm protamine P1 (PRM1).